Consider the following 510-residue polypeptide: ATP synthase subunit alpha (510 aa).

171 to 178 (GDRQTGKT) contributes to the ATP binding site.

Belongs to the ATPase alpha/beta chains family. F-type ATPases have 2 components, CF(1) - the catalytic core - and CF(0) - the membrane proton channel. CF(1) has five subunits: alpha(3), beta(3), gamma(1), delta(1), epsilon(1). CF(0) has three main subunits: a(1), b(2) and c(9-12). The alpha and beta chains form an alternating ring which encloses part of the gamma chain. CF(1) is attached to CF(0) by a central stalk formed by the gamma and epsilon chains, while a peripheral stalk is formed by the delta and b chains.

The protein localises to the cell inner membrane. It carries out the reaction ATP + H2O + 4 H(+)(in) = ADP + phosphate + 5 H(+)(out). Its function is as follows. Produces ATP from ADP in the presence of a proton gradient across the membrane. The alpha chain is a regulatory subunit. The chain is ATP synthase subunit alpha from Phenylobacterium zucineum (strain HLK1).